The sequence spans 121 residues: Non-specific lipid-transfer protein 9 (121 aa).

The N-terminal stretch at 1 to 27 (MRKSISIAFVIAITIFMSHLNVFTVYS) is a signal peptide. Cystine bridges form between Cys31–Cys80, Cys41–Cys57, Cys58–Cys102, and Cys78–Cys116.

The protein belongs to the plant LTP family.

In terms of biological role, plant non-specific lipid-transfer proteins transfer phospholipids as well as galactolipids across membranes. May play a role in wax or cutin deposition in the cell walls of expanding epidermal cells and certain secretory tissues. This Arabidopsis thaliana (Mouse-ear cress) protein is Non-specific lipid-transfer protein 9 (LTP9).